The chain runs to 322 residues: HPr kinase/phosphorylase (322 aa).

Active-site residues include His146 and Lys167. 161–168 is an ATP binding site; it reads GDSGLGKS. Ser168 provides a ligand contact to Mg(2+). The Proton acceptor; for phosphorylation activity. Proton donor; for dephosphorylation activity role is filled by Asp185. The segment at 209–218 is important for the catalytic mechanism of both phosphorylation and dephosphorylation; that stretch reads LEVRGLGLLD. Glu210 serves as a coordination point for Mg(2+). The active site involves Arg250. The tract at residues 271-276 is important for the catalytic mechanism of dephosphorylation; the sequence is QVAAGR.

The protein belongs to the HPrK/P family. In terms of assembly, homohexamer. Requires Mg(2+) as cofactor.

The enzyme catalyses [HPr protein]-L-serine + ATP = [HPr protein]-O-phospho-L-serine + ADP + H(+). It catalyses the reaction [HPr protein]-O-phospho-L-serine + phosphate + H(+) = [HPr protein]-L-serine + diphosphate. Its function is as follows. Catalyzes the ATP- as well as the pyrophosphate-dependent phosphorylation of a specific serine residue in HPr, a phosphocarrier protein of the phosphoenolpyruvate-dependent sugar phosphotransferase system (PTS). HprK/P also catalyzes the pyrophosphate-producing, inorganic phosphate-dependent dephosphorylation (phosphorolysis) of seryl-phosphorylated HPr (P-Ser-HPr). The polypeptide is HPr kinase/phosphorylase (Paraburkholderia phymatum (strain DSM 17167 / CIP 108236 / LMG 21445 / STM815) (Burkholderia phymatum)).